We begin with the raw amino-acid sequence, 626 residues long: (+)-3-carene synthase 1, chloroplastic (626 aa).

Residues 1–45 constitute a chloroplast transit peptide; that stretch reads MSLISAVPLASSCVSKSLISSVREHTALRRAIATLQMSRRGKSVA. Mg(2+) contacts are provided by aspartate 377, aspartate 381, and aspartate 529. The short motif at 377–381 is the DDXXD motif element; that stretch reads DDMYD.

This sequence belongs to the terpene synthase family. Tpsd subfamily. It depends on Mg(2+) as a cofactor. Mn(2+) is required as a cofactor.

Its subcellular location is the plastid. The protein localises to the chloroplast. It catalyses the reaction (2E)-geranyl diphosphate = (+)-car-3-ene + diphosphate. It carries out the reaction (2E)-geranyl diphosphate = terpinolene + diphosphate. It participates in terpene metabolism; oleoresin biosynthesis. It functions in the pathway secondary metabolite biosynthesis; terpenoid biosynthesis. In terms of biological role, monoterpene synthase (TPS) involved in the biosynthesis of monoterpene natural products included in conifer oleoresin secretions and volatile emissions; these compounds contribute to biotic and abiotic stress defense against herbivores and pathogens. Catalyzes the conversion of (2E)-geranyl diphosphate (GPP) to (+)-car-3-ene and, to a lower extent, to terpinolene. This chain is (+)-3-carene synthase 1, chloroplastic, found in Pinus contorta (Shore pine).